A 739-amino-acid polypeptide reads, in one-letter code: Sulfate transporter (739 aa).

The disordered stretch occupies residues 1-44; sequence MSSENKEQHNLSPRDLPEEAYGFPPELPLGAQRGSSTDLRQFEP. Serine 12 is modified (phosphoserine). 2 consecutive transmembrane segments (helical) span residues 112 to 132 and 137 to 157; these read MMSGLIVGILLVPQSIAYSLL and PIYGLYTSFFASIIYFLFGTS. An N-linked (GlcNAc...) asparagine glycan is attached at asparagine 205. Transmembrane regions (helical) follow at residues 227-247 and 255-275; these read FMAGVYQVAMGFFQVGFVSVY and GFVTGASFTILTSQAKYLLGL. Residue asparagine 357 is glycosylated (N-linked (GlcNAc...) asparagine). Helical transmembrane passes span 378–398, 420–440, 455–475, and 524–544; these read LIPNVAVDAIAISIIGFAITV, AIGFCNIIPSFFHCITTSAAL, LSAIVTSLVLLLVLLLIAPLF, and LLSTEIGLLVGVCFSMFCVIL. In terms of domain architecture, STAS spans 568–719; the sequence is TYKNLRSKSG…YSLSEAVAFA (152 aa).

It belongs to the SLC26A/SulP transporter (TC 2.A.53) family. N-glycosylated. As to expression, cartilage and intestine. Expressed in the kidney (at protein level).

Its subcellular location is the cell membrane. The protein resides in the apical cell membrane. It carries out the reaction oxalate(in) + sulfate(out) = oxalate(out) + sulfate(in). It catalyses the reaction sulfate(out) + 2 chloride(in) = sulfate(in) + 2 chloride(out). The catalysed reaction is oxalate(out) + 2 chloride(in) = oxalate(in) + 2 chloride(out). The enzyme catalyses bromide(in) + chloride(out) = bromide(out) + chloride(in). It carries out the reaction nitrate(in) + chloride(out) = nitrate(out) + chloride(in). It catalyses the reaction iodide(in) + chloride(out) = iodide(out) + chloride(in). Sulfate transporter which mediates sulfate uptake into chondrocytes in order to maintain adequate sulfation of proteoglycans which is needed for cartilage development. Mediates electroneutral anion exchange of sulfate ions for oxalate ions, sulfate and oxalate ions for chloride and/or hydroxyl ions and chloride ions for bromide, iodide and nitrate ions. The coupling of sulfate transport to both hydroxyl and chloride ions likely serves to ensure transport at both acidic pH when most sulfate uptake is mediated by sulfate-hydroxide exchange and alkaline pH when most sulfate uptake is mediated by sulfate-chloride exchange. Essential for chondrocyte proliferation, differentiation and cell size expansion. In Rattus norvegicus (Rat), this protein is Sulfate transporter (Slc26a2).